Reading from the N-terminus, the 873-residue chain is Bifunctional uridylyltransferase/uridylyl-removing enzyme (873 aa).

The segment at 1 to 332 (MAFQSPLTFN…NGGETEPAVI (332 aa)) is uridylyltransferase. The tract at residues 333 to 692 (INEDFQRRGR…MSKKATRGGT (360 aa)) is uridylyl-removing. In terms of domain architecture, HD spans 451–573 (VDEHSVRLLN…VRDEERLEYL (123 aa)). 2 consecutive ACT domains span residues 693 to 773 (EVFV…VKTR) and 800 to 873 (LMEL…ELAP).

It belongs to the GlnD family. The cofactor is Mg(2+).

The catalysed reaction is [protein-PII]-L-tyrosine + UTP = [protein-PII]-uridylyl-L-tyrosine + diphosphate. The enzyme catalyses [protein-PII]-uridylyl-L-tyrosine + H2O = [protein-PII]-L-tyrosine + UMP + H(+). Uridylyltransferase (UTase) activity is inhibited by glutamine, while glutamine activates uridylyl-removing (UR) activity. Modifies, by uridylylation and deuridylylation, the PII regulatory proteins (GlnB and homologs), in response to the nitrogen status of the cell that GlnD senses through the glutamine level. Under low glutamine levels, catalyzes the conversion of the PII proteins and UTP to PII-UMP and PPi, while under higher glutamine levels, GlnD hydrolyzes PII-UMP to PII and UMP (deuridylylation). Thus, controls uridylylation state and activity of the PII proteins, and plays an important role in the regulation of nitrogen assimilation and metabolism. This chain is Bifunctional uridylyltransferase/uridylyl-removing enzyme, found in Vibrio vulnificus (strain YJ016).